The sequence spans 197 residues: Recombination protein RecR (197 aa).

A C4-type zinc finger spans residues 57-72; the sequence is CSVCFALTEQNPCPIC. Positions 79 to 174 constitute a Toprim domain; that stretch reads SVICVVETSQ…RVTRLAHGIP (96 aa).

This sequence belongs to the RecR family.

Its function is as follows. May play a role in DNA repair. It seems to be involved in an RecBC-independent recombinational process of DNA repair. It may act with RecF and RecO. This chain is Recombination protein RecR, found in Trichlorobacter lovleyi (strain ATCC BAA-1151 / DSM 17278 / SZ) (Geobacter lovleyi).